The primary structure comprises 97 residues: Protein E7 (97 aa).

The interval 1 to 40 is E7 terminal domain; the sequence is MIGKQATLRDIVLEELVQPIDLHCHEELTEEVEEAVVEEE. Positions 22-26 match the LXCXE motif; interaction with host RB1 and TMEM173/STING motif; that stretch reads LHCHE. A zinc finger lies at 52 to 88; it reads CGGCETQLKLYVLATDFGIRSFQASLLENVKLVCPAC. A Nuclear export signal motif is present at residues 70 to 78; the sequence is IRSFQASLL.

The protein belongs to the papillomaviridae E7 protein family. As to quaternary structure, homodimer. Homooligomer. Interacts with host RB1; this interaction induces dissociation of RB1-E2F1 complex thereby disrupting RB1 activity. Interacts with host EP300; this interaction represses EP300 transcriptional activity. Interacts with protein E2; this interaction inhibits E7 oncogenic activity. Interacts with host TMEM173/STING; this interaction impairs the ability of TMEM173/STING to sense cytosolic DNA and promote the production of type I interferon (IFN-alpha and IFN-beta). Highly phosphorylated.

The protein localises to the host cytoplasm. Its subcellular location is the host nucleus. In terms of biological role, plays a role in viral genome replication by driving entry of quiescent cells into the cell cycle. Stimulation of progression from G1 to S phase allows the virus to efficiently use the cellular DNA replicating machinery to achieve viral genome replication. E7 protein has both transforming and trans-activating activities. Induces the disassembly of the E2F1 transcription factor from RB1, with subsequent transcriptional activation of E2F1-regulated S-phase genes. Interferes with host histone deacetylation mediated by HDAC1 and HDAC2, leading to transcription activation. Also plays a role in the inhibition of both antiviral and antiproliferative functions of host interferon alpha. Interaction with host TMEM173/STING impairs the ability of TMEM173/STING to sense cytosolic DNA and promote the production of type I interferon (IFN-alpha and IFN-beta). This is Protein E7 from Human papillomavirus 23.